The following is a 154-amino-acid chain: Putative pre-16S rRNA nuclease (154 aa).

The protein belongs to the YqgF nuclease family.

It is found in the cytoplasm. Its function is as follows. Could be a nuclease involved in processing of the 5'-end of pre-16S rRNA. In Rickettsia akari (strain Hartford), this protein is Putative pre-16S rRNA nuclease.